Reading from the N-terminus, the 540-residue chain is Chaperonin GroEL (540 aa).

ATP is bound by residues 29-32 (TIGP), 86-90 (DGTTT), Gly-413, 477-479 (NAA), and Asp-493.

Belongs to the chaperonin (HSP60) family. Forms a cylinder of 14 subunits composed of two heptameric rings stacked back-to-back. Interacts with the co-chaperonin GroES.

The protein resides in the cytoplasm. It catalyses the reaction ATP + H2O + a folded polypeptide = ADP + phosphate + an unfolded polypeptide.. Together with its co-chaperonin GroES, plays an essential role in assisting protein folding. The GroEL-GroES system forms a nano-cage that allows encapsulation of the non-native substrate proteins and provides a physical environment optimized to promote and accelerate protein folding. The polypeptide is Chaperonin GroEL (Lactobacillus helveticus (strain DPC 4571)).